A 367-amino-acid polypeptide reads, in one-letter code: C-X-C chemokine receptor type 3 (367 aa).

The Extracellular portion of the chain corresponds to 1–56; sequence MYLEVSERQVLDASDIAFLLENSTSPYDYGENESDFSDSPPCPQDFSLNFDRTFLP. Asparagine 22 carries N-linked (GlcNAc...) asparagine glycosylation. A sulfotyrosine mark is found at tyrosine 27 and tyrosine 29. N-linked (GlcNAc...) asparagine glycosylation occurs at asparagine 32. Residues 57 to 77 traverse the membrane as a helical segment; sequence VLYSLLFLLGLLGNGAVAAVL. Residues 78 to 89 are Cytoplasmic-facing; sequence LSQRTALSSTDT. A helical membrane pass occupies residues 90-110; that stretch reads FLLHLAVADVLLVLTLPLWAV. Residues 111–125 are Extracellular-facing; the sequence is DAAAQWVFGSGLCKV. Cysteine 123 and cysteine 202 are joined by a disulfide. The chain crosses the membrane as a helical span at residues 126–146; sequence AGALFNINFYAGAFLLACISF. The Cytoplasmic segment spans residues 147 to 168; the sequence is DRYLSIVHATQIYRRDPWVRVA. A helical membrane pass occupies residues 169–189; it reads LTCIVVWGLCVLFALPDFIFL. Residues 190–222 are Extracellular-facing; it reads SASHDQRLNATHCQYNFPQVGRTALRVLQLVAG. Asparagine 198 carries an N-linked (GlcNAc...) asparagine glycan. A helical membrane pass occupies residues 223-243; the sequence is FLMPLLVMAYCYAHILAVLLV. Over 244 to 255 the chain is Cytoplasmic; it reads SRGQRRFRAMRL. Residues 256 to 276 form a helical membrane-spanning segment; the sequence is VVVVVVAFAVCWTPYHLVVLV. At 277 to 300 the chain is on the extracellular side; sequence DILMDVGVLARNCGRESHVDVAKS. Residues 301 to 321 form a helical membrane-spanning segment; the sequence is VTSGMGYMHCCLNPLLYAFVG. Residues 322–367 lie on the Cytoplasmic side of the membrane; it reads VKFKEQMWMLLMRLGRSDQRGPQRQPSSSRRESSWSETTEASYLGL. The tract at residues 339 to 367 is disordered; sequence DQRGPQRQPSSSRRESSWSETTEASYLGL.

This sequence belongs to the G-protein coupled receptor 1 family. Homomer. Forms heteromers with ACKR4. Interacts with PF4/CXCL4. In terms of processing, sulfation on Tyr-27 and Tyr-29 is essential for CXCL10 binding. Post-translationally, N-glycosylated.

It is found in the cell membrane. Functionally, receptor for the C-X-C chemokine CXCL9, CXCL10 and CXCL11 and mediates the proliferation, survival and angiogenic activity of mesangial cells through a heterotrimeric G-protein signaling pathway. Probably promotes cell chemotaxis response. Binds to CCL21. Upon activation by PF4, induces activated T-lymphocytes migration mediated via downstream Ras/extracellular signal-regulated kinase (ERK) signaling. The polypeptide is C-X-C chemokine receptor type 3 (Cxcr3) (Rattus norvegicus (Rat)).